Here is a 358-residue protein sequence, read N- to C-terminus: Peptide chain release factor 1 (358 aa).

Gln-233 carries the N5-methylglutamine modification.

It belongs to the prokaryotic/mitochondrial release factor family. In terms of processing, methylated by PrmC. Methylation increases the termination efficiency of RF1.

It localises to the cytoplasm. Its function is as follows. Peptide chain release factor 1 directs the termination of translation in response to the peptide chain termination codons UAG and UAA. The chain is Peptide chain release factor 1 from Lachnoclostridium phytofermentans (strain ATCC 700394 / DSM 18823 / ISDg) (Clostridium phytofermentans).